The primary structure comprises 75 residues: UPF0352 protein VIBHAR_03027 (75 aa).

Belongs to the UPF0352 family.

This Vibrio campbellii (strain ATCC BAA-1116) protein is UPF0352 protein VIBHAR_03027.